Consider the following 262-residue polypeptide: Acyl-[acyl-carrier-protein]--UDP-N-acetylglucosamine O-acyltransferase (262 aa).

It belongs to the transferase hexapeptide repeat family. LpxA subfamily. In terms of assembly, homotrimer.

The protein localises to the cytoplasm. It catalyses the reaction a (3R)-hydroxyacyl-[ACP] + UDP-N-acetyl-alpha-D-glucosamine = a UDP-3-O-[(3R)-3-hydroxyacyl]-N-acetyl-alpha-D-glucosamine + holo-[ACP]. It participates in glycolipid biosynthesis; lipid IV(A) biosynthesis; lipid IV(A) from (3R)-3-hydroxytetradecanoyl-[acyl-carrier-protein] and UDP-N-acetyl-alpha-D-glucosamine: step 1/6. Involved in the biosynthesis of lipid A, a phosphorylated glycolipid that anchors the lipopolysaccharide to the outer membrane of the cell. The polypeptide is Acyl-[acyl-carrier-protein]--UDP-N-acetylglucosamine O-acyltransferase (Janthinobacterium sp. (strain Marseille) (Minibacterium massiliensis)).